The primary structure comprises 498 residues: Protein spinster homolog 3 (498 aa).

The next 12 membrane-spanning stretches (helical) occupy residues Ile-49 to Val-71, Gly-87 to Leu-107, Lys-114 to Val-134, Leu-148 to Phe-168, Leu-175 to Gly-195, Trp-207 to Ile-227, Phe-260 to Trp-280, Tyr-309 to Ile-329, Leu-343 to Ala-363, Phe-373 to Leu-393, Leu-407 to Ile-427, and Leu-451 to Ile-471.

The protein belongs to the major facilitator superfamily. Spinster (TC 2.A.1.49) family.

The protein localises to the membrane. Its function is as follows. Sphingolipid transporter. The sequence is that of Protein spinster homolog 3 (spns3) from Danio rerio (Zebrafish).